A 277-amino-acid chain; its full sequence is Elongation factor 1-delta (277 aa).

Ala-2 is modified (N-acetylalanine). Lys-17 is subject to N6-acetyllysine. A phosphoserine mark is found at Ser-37, Ser-44, Ser-60, Ser-86, and Ser-106. N6-acetyllysine is present on Lys-107. The interval 113-171 is disordered; it reads SALEKSSPAHRATTPQTQHVSPMRQVEPPSRKAATATEDDEDDDIDLFGSDEEEDKEAA. At Lys-117 the chain carries N6-acetyllysine; alternate. Position 117 is an N6-succinyllysine; alternate (Lys-117). Ser-119 bears the Phosphoserine mark. A Phosphothreonine modification is found at Thr-129. Ser-133 carries the phosphoserine modification. Thr-147 is modified (phosphothreonine). Residues 149 to 168 are compositionally biased toward acidic residues; it reads TEDDEDDDIDLFGSDEEEDK. Ser-162 carries the post-translational modification Phosphoserine; by CK2.

It belongs to the EF-1-beta/EF-1-delta family. EF-1 is composed of 4 subunits: alpha, beta, delta, and gamma.

In terms of biological role, EF-1-beta and EF-1-delta stimulate the exchange of GDP bound to EF-1-alpha to GTP. This chain is Elongation factor 1-delta (EEF1D), found in Ovis aries (Sheep).